We begin with the raw amino-acid sequence, 101 residues long: Non-histone chromosomal protein HMG-14 (101 aa).

The tract at residues 1-101 is disordered; the sequence is MPKRKVSSAE…EAEEKEAKSD (101 aa). Ser7 carries the post-translational modification ADP-ribosylserine. Ser8 bears the Phosphoserine mark. Lys14 carries the N6-acetyllysine modification. Ser21 bears the Phosphoserine mark. ADP-ribosylserine; alternate is present on Ser25. At Ser25 the chain carries Phosphoserine; alternate. Lys27 carries the post-translational modification N6-acetyllysine. Basic and acidic residues-rich tracts occupy residues 33 to 51 and 70 to 86; these read VETK…DKKV and ETKE…KNEE. Thr82 carries the phosphothreonine modification. Lys83 is modified (N6-acetyllysine). Ser87, Ser90, and Ser100 each carry phosphoserine.

The protein belongs to the HMGN family. As to quaternary structure, interacts with transcriptional regulator SEHBP. Phosphorylation on Ser-21 and Ser-25 weakens binding to nucleosomes and increases the rate of H3 phosphorylation.

The protein localises to the nucleus. Binds to the inner side of the nucleosomal DNA thus altering the interaction between the DNA and the histone octamer. May be involved in the process which maintains transcribable genes in a unique chromatin conformation. Inhibits the phosphorylation of nucleosomal histones H3 and H2A by RPS6KA5/MSK1 and RPS6KA3/RSK2. The polypeptide is Non-histone chromosomal protein HMG-14 (HMGN1) (Bos taurus (Bovine)).